Consider the following 204-residue polypeptide: MKVKICGITDMETAKRACEYGADALGFVFAESKRKITPGLAKEIIQELPANVLKIGVFVNESVEVIQKITGNCGLTHVQLHGGEDNHQIRRLNIPSIKSLGVTSESDMKNAQGYETDYILFDSPKEKFHGGNGKTFPWELLAHMPKELREKTILAGGLNTLNIEEAIRTVRPYMVDVSSGVETEGKKDVEKIKQFIIKAKECSK.

Belongs to the TrpF family.

It catalyses the reaction N-(5-phospho-beta-D-ribosyl)anthranilate = 1-(2-carboxyphenylamino)-1-deoxy-D-ribulose 5-phosphate. The protein operates within amino-acid biosynthesis; L-tryptophan biosynthesis; L-tryptophan from chorismate: step 3/5. This chain is N-(5'-phosphoribosyl)anthranilate isomerase, found in Bacillus anthracis (strain A0248).